The chain runs to 445 residues: Methylenetetrahydrofolate--tRNA-(uracil-5-)-methyltransferase TrmFO (445 aa).

9–14 (GGGLAG) serves as a coordination point for FAD.

This sequence belongs to the MnmG family. TrmFO subfamily. FAD is required as a cofactor.

Its subcellular location is the cytoplasm. The catalysed reaction is uridine(54) in tRNA + (6R)-5,10-methylene-5,6,7,8-tetrahydrofolate + NADH + H(+) = 5-methyluridine(54) in tRNA + (6S)-5,6,7,8-tetrahydrofolate + NAD(+). It catalyses the reaction uridine(54) in tRNA + (6R)-5,10-methylene-5,6,7,8-tetrahydrofolate + NADPH + H(+) = 5-methyluridine(54) in tRNA + (6S)-5,6,7,8-tetrahydrofolate + NADP(+). Its function is as follows. Catalyzes the folate-dependent formation of 5-methyl-uridine at position 54 (M-5-U54) in all tRNAs. This chain is Methylenetetrahydrofolate--tRNA-(uracil-5-)-methyltransferase TrmFO, found in Solibacter usitatus (strain Ellin6076).